Consider the following 727-residue polypeptide: Polyribonucleotide nucleotidyltransferase (727 aa).

Positions 488 and 494 each coordinate Mg(2+). The region spanning 555–614 (PKLYTMKINPEKIRDVIGKGGATIRALTDETGCQINIEEDGTITIAATEAAKADEAKRRI) is the KH domain. Positions 624–692 (GKVYEGPVTK…DKGRVKLSMK (69 aa)) constitute an S1 motif domain. Positions 691 to 727 (MKALADRPAGDSGRPAPAERGERRERRDGGASEQQQQ) are disordered. The span at 707–720 (PAERGERRERRDGG) shows a compositional bias: basic and acidic residues.

The protein belongs to the polyribonucleotide nucleotidyltransferase family. The cofactor is Mg(2+).

The protein localises to the cytoplasm. The enzyme catalyses RNA(n+1) + phosphate = RNA(n) + a ribonucleoside 5'-diphosphate. Functionally, involved in mRNA degradation. Catalyzes the phosphorolysis of single-stranded polyribonucleotides processively in the 3'- to 5'-direction. The chain is Polyribonucleotide nucleotidyltransferase from Acidovorax ebreus (strain TPSY) (Diaphorobacter sp. (strain TPSY)).